The chain runs to 289 residues: Elongation factor Ts (289 aa).

The interval 80–83 (TDFV) is involved in Mg(2+) ion dislocation from EF-Tu.

This sequence belongs to the EF-Ts family.

Its subcellular location is the cytoplasm. Functionally, associates with the EF-Tu.GDP complex and induces the exchange of GDP to GTP. It remains bound to the aminoacyl-tRNA.EF-Tu.GTP complex up to the GTP hydrolysis stage on the ribosome. The chain is Elongation factor Ts from Francisella tularensis subsp. tularensis (strain FSC 198).